Reading from the N-terminus, the 1009-residue chain is 2-oxoglutarate dehydrogenase, mitochondrial (1009 aa).

The N-terminal 39 residues, 1 to 39, are a transit peptide targeting the mitochondrion; the sequence is MLRFIPSSAKARALRRSAVTAYRLNRLTCLSSLQQNRTF. Positions 305, 404, 437, 439, and 669 each coordinate thiamine diphosphate. 3 residues coordinate Mg(2+): aspartate 404, asparagine 437, and isoleucine 439.

This sequence belongs to the alpha-ketoglutarate dehydrogenase family. The cofactor is thiamine diphosphate. Mg(2+) is required as a cofactor.

The protein resides in the mitochondrion matrix. The enzyme catalyses N(6)-[(R)-lipoyl]-L-lysyl-[protein] + 2-oxoglutarate + H(+) = N(6)-[(R)-S(8)-succinyldihydrolipoyl]-L-lysyl-[protein] + CO2. Catabolite repressed. In terms of biological role, the 2-oxoglutarate dehydrogenase complex catalyzes the overall conversion of 2-oxoglutarate to succinyl-CoA and CO(2). It contains multiple copies of three enzymatic components: 2-oxoglutarate dehydrogenase (E1), dihydrolipoamide succinyltransferase (E2) and lipoamide dehydrogenase (E3). This Schizosaccharomyces pombe (strain 972 / ATCC 24843) (Fission yeast) protein is 2-oxoglutarate dehydrogenase, mitochondrial (kgd1).